A 155-amino-acid chain; its full sequence is Chromosomal passenger complex protein bir-1 (155 aa).

The BIR repeat unit spans residues 20–87 (RLMTFKNFEY…KRDEPCEFVR (68 aa)). Zn(2+) contacts are provided by C57, C60, H76, and C83.

Belongs to the IAP family. As to quaternary structure, component of the CPC complex which consists of icp-1; csc-1; bir-1 and air-2. Within the complex, interacts with csc-1, icp-1 and air-2. Interacts with csc-1 in a zinc-dependent-manner; the interaction is direct. In terms of tissue distribution, expressed in oocytes and sperm.

The protein localises to the chromosome. It is found in the cytoplasm. It localises to the cytoskeleton. The protein resides in the spindle. Its subcellular location is the midbody. Component of the chromosomal passenger complex (CPC), a complex that acts as a key regulator of chromosome segregation and cytokinesis. The CPC complex has essential functions at the centromere in ensuring correct chromosome condensation, alignment and segregation. In the complex, required to direct the Aurora B/air-2 kinase to chromosomes. Also functions in spindle midzone formation and in the formation of polar bodies during oogenesis. Required for the localization of the kinetochore component hcp-1 to chromosomes. Involved in the positive regulation of transcription. Involved in the transcriptional regulation of collagen genes. This is Chromosomal passenger complex protein bir-1 from Caenorhabditis elegans.